We begin with the raw amino-acid sequence, 375 residues long: uncharacterized protein (375 aa).

Residue lysine 99 forms an Isoglutamyl lysine isopeptide (Lys-Gln) (interchain with Q-Cter in protein Pup) linkage.

This sequence belongs to the IMPDH/GMPR family.

This is an uncharacterized protein from Mycolicibacterium smegmatis (strain ATCC 700084 / mc(2)155) (Mycobacterium smegmatis).